We begin with the raw amino-acid sequence, 1748 residues long: Flagellar attachment zone protein 1 (1748 aa).

3 coiled-coil regions span residues 613 to 657, 684 to 864, and 903 to 1663; these read REQE…KLQK, VTLD…HKVR, and NDHM…SALE. Repeat copies occupy residues 1012-1025, 1026-1039, 1040-1053, 1054-1067, 1068-1081, 1082-1095, 1096-1109, 1110-1123, 1124-1137, 1138-1151, 1152-1165, 1166-1179, 1180-1193, 1194-1207, 1208-1221, 1222-1235, 1236-1249, 1250-1263, 1264-1277, 1278-1291, 1292-1305, 1306-1319, 1320-1333, 1334-1347, 1348-1361, 1362-1375, 1376-1389, 1390-1403, 1404-1417, 1418-1431, 1432-1445, 1446-1459, 1460-1473, 1474-1487, 1488-1501, 1502-1515, 1516-1529, 1530-1543, 1544-1557, 1558-1571, and 1572-1585. The tract at residues 1012–1529 is 41 X 14 AA tandem repeats of E-E-L-E-L-K-[VA]-A-E-N-E-K-L-A; the sequence is EELELKAAEN…LKAAENEKLA (518 aa).

The protein localises to the cell projection. Its subcellular location is the cilium. It localises to the flagellum. A component of FAZ filament that is required for correct FAZ assembly and attachment. Not essential for new flagellum growth. This chain is Flagellar attachment zone protein 1, found in Trypanosoma brucei gambiense (strain MHOM/CI/86/DAL972).